We begin with the raw amino-acid sequence, 438 residues long: 3-phosphoshikimate 1-carboxyvinyltransferase (438 aa).

3 residues coordinate 3-phosphoshikimate: K26, S27, and R31. K26 provides a ligand contact to phosphoenolpyruvate. 2 residues coordinate phosphoenolpyruvate: G99 and R127. The 3-phosphoshikimate site is built by S170, S171, Q172, S199, E314, and H343. A phosphoenolpyruvate-binding site is contributed by Q172. E314 serves as the catalytic Proton acceptor. Residues R347, R388, and K413 each coordinate phosphoenolpyruvate.

It belongs to the EPSP synthase family. As to quaternary structure, monomer.

Its subcellular location is the cytoplasm. The catalysed reaction is 3-phosphoshikimate + phosphoenolpyruvate = 5-O-(1-carboxyvinyl)-3-phosphoshikimate + phosphate. It functions in the pathway metabolic intermediate biosynthesis; chorismate biosynthesis; chorismate from D-erythrose 4-phosphate and phosphoenolpyruvate: step 6/7. Functionally, catalyzes the transfer of the enolpyruvyl moiety of phosphoenolpyruvate (PEP) to the 5-hydroxyl of shikimate-3-phosphate (S3P) to produce enolpyruvyl shikimate-3-phosphate and inorganic phosphate. This chain is 3-phosphoshikimate 1-carboxyvinyltransferase, found in Mycobacterium sp. (strain JLS).